A 187-amino-acid polypeptide reads, in one-letter code: 1,6-anhydro-N-acetylmuramyl-L-alanine amidase AmpD (187 aa).

Positions 29 to 167 constitute an N-acetylmuramoyl-L-alanine amidase domain; it reads TLLVVHNISL…APERKTDPGP (139 aa). Residue H34 participates in Zn(2+) binding. The active-site Proton acceptor is the E116. H154 and D164 together coordinate Zn(2+).

This sequence belongs to the N-acetylmuramoyl-L-alanine amidase 2 family. The cofactor is Zn(2+).

It is found in the cytoplasm. It carries out the reaction Hydrolyzes the link between N-acetylmuramoyl residues and L-amino acid residues in certain cell-wall glycopeptides.. In terms of biological role, involved in cell wall peptidoglycan recycling. Specifically cleaves the amide bond between the lactyl group of N-acetylmuramic acid and the alpha-amino group of the L-alanine in degradation products containing an anhydro N-acetylmuramyl moiety. In Enterobacter cloacae, this protein is 1,6-anhydro-N-acetylmuramyl-L-alanine amidase AmpD.